A 600-amino-acid polypeptide reads, in one-letter code: UPF0588 membrane protein C20F10.02c (600 aa).

2 helical membrane passes run 409–429 (LSATMYFLYFSFVYRAMTSLV) and 437–457 (YHWLELWRVLFSFLDFVSVLI).

The protein belongs to the UPF0588 family.

Its subcellular location is the membrane. The sequence is that of UPF0588 membrane protein C20F10.02c from Schizosaccharomyces pombe (strain 972 / ATCC 24843) (Fission yeast).